Reading from the N-terminus, the 416-residue chain is Glutamyl-tRNA reductase (416 aa).

Substrate is bound by residues 49–52 (TCNR), serine 105, 110–112 (EPQ), and glutamine 116. Cysteine 50 (nucleophile) is an active-site residue. 185-190 (GAGETI) contacts NADP(+).

The protein belongs to the glutamyl-tRNA reductase family. Homodimer.

It catalyses the reaction (S)-4-amino-5-oxopentanoate + tRNA(Glu) + NADP(+) = L-glutamyl-tRNA(Glu) + NADPH + H(+). The protein operates within porphyrin-containing compound metabolism; protoporphyrin-IX biosynthesis; 5-aminolevulinate from L-glutamyl-tRNA(Glu): step 1/2. Catalyzes the NADPH-dependent reduction of glutamyl-tRNA(Glu) to glutamate 1-semialdehyde (GSA). In Shewanella frigidimarina (strain NCIMB 400), this protein is Glutamyl-tRNA reductase.